Consider the following 453-residue polypeptide: Major fimbrium subunit FimC (453 aa).

The first 28 residues, 1–28, serve as a signal peptide directing secretion; it reads MKMKYFHHPSGLLPRLLLLLLLTMGAVA. Cys-29 carries N-palmitoyl cysteine lipidation. The S-diacylglycerol cysteine moiety is linked to residue Cys-29. Residues 29-56 constitute a propeptide that is removed on maturation; the sequence is CTKEDNPDQPTSDEVATVKMSLDDVEMR.

The protein belongs to the bacteroidetes fimbrillin superfamily. FimA/Mfa1 family. Fimbriae are composed of a major, structural subunit and the minor components FimC, FimD and FimE. Identified in a complex composed of FimC, FimD and FimE (in vitro). The complex interacts with host extracellular matrix proteins, including fibronectin and type I collagen. Interacts with host CXCR4.

It localises to the fimbrium. The protein localises to the cell outer membrane. In terms of biological role, minor component of fimbriae. These long, filamentous pili are attached to the cell surface; they mediate biofilm formation, adhesion onto host cells and onto other bacteria that are part of the oral microbiome. They play an important role in invasion of periodontal tissues and are major virulence factors. FimC, FimD and FimE contribute to interaction with host CXCR4 and thereby down-regulate the TLR2-mediated host immune response. This chain is Major fimbrium subunit FimC, found in Porphyromonas gingivalis (strain ATCC 33277 / DSM 20709 / CIP 103683 / JCM 12257 / NCTC 11834 / 2561).